We begin with the raw amino-acid sequence, 434 residues long: D-amino acid dehydrogenase (434 aa).

Position 3 to 17 (3 to 17 (VVILGSGVVGVASAW)) interacts with FAD.

Belongs to the DadA oxidoreductase family. FAD is required as a cofactor.

It catalyses the reaction a D-alpha-amino acid + A + H2O = a 2-oxocarboxylate + AH2 + NH4(+). It participates in amino-acid degradation; D-alanine degradation; NH(3) and pyruvate from D-alanine: step 1/1. Functionally, oxidative deamination of D-amino acids. The sequence is that of D-amino acid dehydrogenase from Yersinia enterocolitica serotype O:8 / biotype 1B (strain NCTC 13174 / 8081).